We begin with the raw amino-acid sequence, 1824 residues long: E3 ubiquitin-protein ligase UBR1 (1824 aa).

The UBR-type zinc-finger motif lies at 107–178; the sequence is TVCGKVFKNG…KDQYCELHLA (72 aa). Disordered regions lie at residues 1006–1043 and 1073–1093; these read KQAPSDGRAGPSCSQQGTGGKLSLSAEEQAREERENRA and ADTENETRKESASTGPMDWED. Residues 1033 to 1043 show a composition bias toward basic and acidic residues; sequence EQAREERENRA. The segment at 1126–1220 adopts an RING-type; atypical zinc-finger fold; the sequence is FKCILCFENC…VEFQCPYCRT (95 aa).

This sequence belongs to the E3 ubiquitin-protein ligase UBR1-like family.

It carries out the reaction S-ubiquitinyl-[E2 ubiquitin-conjugating enzyme]-L-cysteine + [acceptor protein]-L-lysine = [E2 ubiquitin-conjugating enzyme]-L-cysteine + N(6)-ubiquitinyl-[acceptor protein]-L-lysine.. It functions in the pathway protein modification; protein ubiquitination. Its function is as follows. E3 ubiquitin-protein ligase which is a component of the N-end rule pathway. Recognizes and binds to proteins bearing specific N-terminal residues that are destabilizing according to the N-end rule, leading to their ubiquitination and subsequent degradation. This chain is E3 ubiquitin-protein ligase UBR1, found in Drosophila melanogaster (Fruit fly).